Consider the following 235-residue polypeptide: Myc target protein 1 (235 aa).

A Bipartite nuclear localization signal motif is present at residues 95–113; that stretch reads RRRRASAPISQWSSSRRSR. Phosphoserine occurs at positions 135, 138, 141, and 149.

The protein belongs to the MYCT1 family. Down-regulated in gastric cancer tissues.

It localises to the nucleus. In terms of biological role, may regulate certain MYC target genes, MYC seems to be a direct upstream transcriptional activator. Does not seem to significantly affect growth cell capacity. Overexpression seems to mediate many of the known phenotypic features associated with MYC, including promotion of apoptosis, alteration of morphology, enhancement of anchorage-independent growth, tumorigenic conversion, promotion of genomic instability, and inhibition of hematopoietic differentiation. The chain is Myc target protein 1 (MYCT1) from Homo sapiens (Human).